Reading from the N-terminus, the 129-residue chain is Glycine cleavage system H protein (129 aa).

A Lipoyl-binding domain is found at 24–106; the sequence is LVRIGISAFA…HGEGWLLLVK (83 aa). Lysine 65 carries the post-translational modification N6-lipoyllysine.

The protein belongs to the GcvH family. In terms of assembly, the glycine cleavage system is composed of four proteins: P, T, L and H. Requires (R)-lipoate as cofactor.

In terms of biological role, the glycine cleavage system catalyzes the degradation of glycine. The H protein shuttles the methylamine group of glycine from the P protein to the T protein. This chain is Glycine cleavage system H protein, found in Prochlorococcus marinus (strain SARG / CCMP1375 / SS120).